Here is a 476-residue protein sequence, read N- to C-terminus: Aspartyl/glutamyl-tRNA(Asn/Gln) amidotransferase subunit B (476 aa).

This sequence belongs to the GatB/GatE family. GatB subfamily. As to quaternary structure, heterotrimer of A, B and C subunits.

The enzyme catalyses L-glutamyl-tRNA(Gln) + L-glutamine + ATP + H2O = L-glutaminyl-tRNA(Gln) + L-glutamate + ADP + phosphate + H(+). It catalyses the reaction L-aspartyl-tRNA(Asn) + L-glutamine + ATP + H2O = L-asparaginyl-tRNA(Asn) + L-glutamate + ADP + phosphate + 2 H(+). Functionally, allows the formation of correctly charged Asn-tRNA(Asn) or Gln-tRNA(Gln) through the transamidation of misacylated Asp-tRNA(Asn) or Glu-tRNA(Gln) in organisms which lack either or both of asparaginyl-tRNA or glutaminyl-tRNA synthetases. The reaction takes place in the presence of glutamine and ATP through an activated phospho-Asp-tRNA(Asn) or phospho-Glu-tRNA(Gln). The polypeptide is Aspartyl/glutamyl-tRNA(Asn/Gln) amidotransferase subunit B (Geobacillus kaustophilus (strain HTA426)).